The primary structure comprises 440 residues: Ribosomal protein uS12 methylthiotransferase RimO (440 aa).

The MTTase N-terminal domain maps to proline 7–proline 117. The [4Fe-4S] cluster site is built by cysteine 16, cysteine 52, cysteine 81, cysteine 148, cysteine 152, and cysteine 155. In terms of domain architecture, Radical SAM core spans leucine 134–glutamine 370. In terms of domain architecture, TRAM spans lysine 373–glycine 439.

This sequence belongs to the methylthiotransferase family. RimO subfamily. [4Fe-4S] cluster serves as cofactor.

The protein resides in the cytoplasm. The enzyme catalyses L-aspartate(89)-[ribosomal protein uS12]-hydrogen + (sulfur carrier)-SH + AH2 + 2 S-adenosyl-L-methionine = 3-methylsulfanyl-L-aspartate(89)-[ribosomal protein uS12]-hydrogen + (sulfur carrier)-H + 5'-deoxyadenosine + L-methionine + A + S-adenosyl-L-homocysteine + 2 H(+). Its function is as follows. Catalyzes the methylthiolation of an aspartic acid residue of ribosomal protein uS12. The sequence is that of Ribosomal protein uS12 methylthiotransferase RimO from Afipia carboxidovorans (strain ATCC 49405 / DSM 1227 / KCTC 32145 / OM5) (Oligotropha carboxidovorans).